Reading from the N-terminus, the 380-residue chain is Erythronate-4-phosphate dehydrogenase (380 aa).

Residues Ser-45 and Thr-66 each contribute to the substrate site. NAD(+) contacts are provided by residues 126 to 127 (QV), Asp-146, Thr-174, 205 to 207 (ASR), and Asp-231. Arg-207 is a catalytic residue. Glu-236 is a catalytic residue. His-253 functions as the Proton donor in the catalytic mechanism. Gly-256 is an NAD(+) binding site. Substrate is bound at residue Tyr-257.

It belongs to the D-isomer specific 2-hydroxyacid dehydrogenase family. PdxB subfamily. In terms of assembly, homodimer.

The protein resides in the cytoplasm. It catalyses the reaction 4-phospho-D-erythronate + NAD(+) = (R)-3-hydroxy-2-oxo-4-phosphooxybutanoate + NADH + H(+). Its pathway is cofactor biosynthesis; pyridoxine 5'-phosphate biosynthesis; pyridoxine 5'-phosphate from D-erythrose 4-phosphate: step 2/5. Catalyzes the oxidation of erythronate-4-phosphate to 3-hydroxy-2-oxo-4-phosphonooxybutanoate. The chain is Erythronate-4-phosphate dehydrogenase from Pseudomonas savastanoi pv. phaseolicola (strain 1448A / Race 6) (Pseudomonas syringae pv. phaseolicola (strain 1448A / Race 6)).